The primary structure comprises 264 residues: MYAQPKLTSAEYVQHHMSHWKLNLHNFTFTDGGFWTLNLDTLIISVVLGALFILIFYIIARRATASVPGKWQNAIEMAVEAVDGTVKDSFHGDRSLVAPLALTIFIWVFLMNFMDLVPVDLIPRLFQMGGVEHFKAVPTADPTLTFAMSITVFVLVVFYNFKMKGAIGLGKEVLSRPFGWYLMPINVIFRLIDEGVKPISLALRLFGNLFAGELIFILIALLPWWSQFTLGMVWTLFHLLVITVQAFIFMMLTVVYISLAAESH.

The next 5 helical transmembrane spans lie at L39 to I59, V97 to V117, T139 to Y159, L205 to W225, and L239 to L259.

Belongs to the ATPase A chain family. F-type ATPases have 2 components, CF(1) - the catalytic core - and CF(0) - the membrane proton channel. CF(1) has five subunits: alpha(3), beta(3), gamma(1), delta(1), epsilon(1). CF(0) has three main subunits: a(1), b(2) and c(9-12). The alpha and beta chains form an alternating ring which encloses part of the gamma chain. CF(1) is attached to CF(0) by a central stalk formed by the gamma and epsilon chains, while a peripheral stalk is formed by the delta and b chains.

It localises to the cell inner membrane. Functionally, key component of the proton channel; it plays a direct role in the translocation of protons across the membrane. This Coxiella burnetii (strain CbuG_Q212) (Coxiella burnetii (strain Q212)) protein is ATP synthase subunit a.